Here is a 286-residue protein sequence, read N- to C-terminus: CBY1-interacting BAR domain-containing protein 1 (286 aa).

The N-terminal 47 residues, 1–47, are a transit peptide targeting the mitochondrion; the sequence is MLRRNLDERDAQTKQLQDAVTNVEKHFGELCQIFAAYVRKTARLRDK. Residues 10–220 are BAR-like; that stretch reads DAQTKQLQDA…NIDEDEDLEV (211 aa). Residues 107–178 are a coiled coil; that stretch reads KMKRDDLKAT…IDNFEKQKIK (72 aa). The disordered stretch occupies residues 258 to 286; it reads GQISTCRTRKDQQVEDEDDEELDVTEDEN. Over residues 271 to 286 the composition is skewed to acidic residues; that stretch reads VEDEDDEELDVTEDEN.

The protein belongs to the CIBAR family. As to quaternary structure, homodimer (via BAR-like domain). Heterodimer with FAM92B (via BAR-like domains). Interacts (via BAR-like domain) with CBY1; this interaction is required for targeting FAM92A to centriole and cilium basal body. Interacts (via BAR-like domain) with CBY3; both proteins form a ninefold symmetric structure at the flagellar base; are recruited to the annulus in a mutually dependent manner and regulate annulus positionning. As to expression, expressed in the heart, liver, spleen, lung, kidney, brain and muscle (at protein level). Strongly expressed throughout the developing limb bud, including the progress zone and the apical ectodermal ridge.

It localises to the cytoplasm. Its subcellular location is the cytoskeleton. The protein resides in the microtubule organizing center. The protein localises to the centrosome. It is found in the centriole. It localises to the cilium basal body. Its subcellular location is the cell projection. The protein resides in the cilium. The protein localises to the nucleus. It is found in the mitochondrion inner membrane. It localises to the flagellum. Functionally, plays a critical role in regulating mitochondrial ultrastructure and function by maintaining the integrity of mitochondrial morphology, particularly the organization of cristae. Preferentially binds to negatively charged phospholipids like cardiolipin and phosphatidylinositol 4,5-bisphosphate enhancing its interaction with mitochondrial membranes. Induces membrane curvature and tubulation, which are critical for maintaining mitochondrial ultrastructure and the organization of cristae. Plays a crucial role in ciliogenesis. May play a role in limb development through its role in ciliogenesis. Plays a key role in the correct positioning of the annulus, a septin-based ring structure in the sperm flagellum, serving both as a physical barrier and a membrane diffusion barrier that separates the midpiece (MP) from the principal piece (PP). This positioning is essential for proper sperm motility and function. Interacts with CBY3 to form a complex which localizes to the curved membrane region of the flagellar pocket. By doing so, may provide stability and rigidity to the periannular membrane to prevent membrane deformation. This function is crucial for halting annulus migration at the proximal end of the fibrous sheath-containing PP. The protein is CBY1-interacting BAR domain-containing protein 1 of Mus musculus (Mouse).